The following is a 309-amino-acid chain: tRNA dimethylallyltransferase (309 aa).

14 to 21 (GPTASGKS) lines the ATP pocket. 16–21 (TASGKS) contacts substrate. Residues 39–42 (DSMQ) are interaction with substrate tRNA.

This sequence belongs to the IPP transferase family. In terms of assembly, monomer. Requires Mg(2+) as cofactor.

The enzyme catalyses adenosine(37) in tRNA + dimethylallyl diphosphate = N(6)-dimethylallyladenosine(37) in tRNA + diphosphate. Catalyzes the transfer of a dimethylallyl group onto the adenine at position 37 in tRNAs that read codons beginning with uridine, leading to the formation of N6-(dimethylallyl)adenosine (i(6)A). The chain is tRNA dimethylallyltransferase from Geobacter metallireducens (strain ATCC 53774 / DSM 7210 / GS-15).